The following is an 84-amino-acid chain: Large ribosomal subunit protein bL27 (84 aa).

The segment at 1-22 (MAHKKGASSTRNGRDSNAQRLG) is disordered. Over residues 7 to 19 (ASSTRNGRDSNAQ) the composition is skewed to polar residues.

The protein belongs to the bacterial ribosomal protein bL27 family.

This is Large ribosomal subunit protein bL27 from Streptomyces avermitilis (strain ATCC 31267 / DSM 46492 / JCM 5070 / NBRC 14893 / NCIMB 12804 / NRRL 8165 / MA-4680).